Consider the following 132-residue polypeptide: MATKVAEIKTLKQGKYLVLGGEASKITSISTSSPGKHGAAKARIEAVGIFDNQKRSLVKPVNAKVDIPIIDKRVGQVLAIMGEEVQLMDLETYETIDLPIPEDLKGDIAEGKEVEYIEAMGNMKIMRTKGGN.

A Hypusine modification is found at Lys36.

This sequence belongs to the eIF-5A family.

It localises to the cytoplasm. Functions by promoting the formation of the first peptide bond. The protein is Translation initiation factor 5A of Methanosphaera stadtmanae (strain ATCC 43021 / DSM 3091 / JCM 11832 / MCB-3).